The chain runs to 337 residues: F420-dependent glucose-6-phosphate dehydrogenase (337 aa).

D40 is a coenzyme F420-(gamma-Glu)n binding site. H41 (proton donor) is an active-site residue. Residues T77 and 108–109 (SG) contribute to the coenzyme F420-(gamma-Glu)n site. E110 functions as the Proton acceptor in the catalytic mechanism. Coenzyme F420-(gamma-Glu)n-binding positions include N113, 178 to 179 (GG), and 181 to 182 (VV). T196, K199, K260, and R284 together coordinate substrate.

The protein belongs to the F420-dependent glucose-6-phosphate dehydrogenase family. As to quaternary structure, homodimer.

It catalyses the reaction oxidized coenzyme F420-(gamma-L-Glu)(n) + D-glucose 6-phosphate + H(+) = 6-phospho-D-glucono-1,5-lactone + reduced coenzyme F420-(gamma-L-Glu)(n). Its function is as follows. Catalyzes the coenzyme F420-dependent oxidation of glucose 6-phosphate (G6P) to 6-phosphogluconolactone. This is F420-dependent glucose-6-phosphate dehydrogenase from Rhodococcus erythropolis (strain PR4 / NBRC 100887).